The following is a 505-amino-acid chain: ATP synthase subunit alpha, chloroplastic (505 aa).

ATP is bound at residue 170-177 (GDRQTGKT).

It belongs to the ATPase alpha/beta chains family. In terms of assembly, F-type ATPases have 2 components, CF(1) - the catalytic core - and CF(0) - the membrane proton channel. CF(1) has five subunits: alpha(3), beta(3), gamma(1), delta(1), epsilon(1). CF(0) has four main subunits: a, b, b' and c.

It is found in the plastid. The protein resides in the chloroplast thylakoid membrane. The enzyme catalyses ATP + H2O + 4 H(+)(in) = ADP + phosphate + 5 H(+)(out). Produces ATP from ADP in the presence of a proton gradient across the membrane. The alpha chain is a regulatory subunit. This chain is ATP synthase subunit alpha, chloroplastic, found in Phaeodactylum tricornutum (strain CCAP 1055/1).